Here is a 197-residue protein sequence, read N- to C-terminus: LexA repressor (197 aa).

The segment at residues Val-28–Ile-47 is a DNA-binding region (H-T-H motif). Catalysis depends on for autocatalytic cleavage activity residues Ser-119 and Lys-156.

Belongs to the peptidase S24 family. Homodimer.

The catalysed reaction is Hydrolysis of Ala-|-Gly bond in repressor LexA.. Represses a number of genes involved in the response to DNA damage (SOS response), including recA and lexA. In the presence of single-stranded DNA, RecA interacts with LexA causing an autocatalytic cleavage which disrupts the DNA-binding part of LexA, leading to derepression of the SOS regulon and eventually DNA repair. In Thermotoga maritima (strain ATCC 43589 / DSM 3109 / JCM 10099 / NBRC 100826 / MSB8), this protein is LexA repressor.